Consider the following 64-residue polypeptide: Prokaryotic ubiquitin-like protein Pup (64 aa).

A disordered region spans residues 1–37; that stretch reads MAQEQTKRGGGGGDDDDIAGSTAAGQERREKLTEETD. The ARC ATPase binding stretch occupies residues 21-58; sequence STAAGQERREKLTEETDDLLDEIDDVLEENAEDFVRAY. A coiled-coil region spans residues 23–52; sequence AAGQERREKLTEETDDLLDEIDDVLEENAE. Glutamine 64 is subject to Deamidated glutamine. Glutamine 64 is covalently cross-linked (Isoglutamyl lysine isopeptide (Gln-Lys) (interchain with K-? in acceptor proteins)).

The protein belongs to the prokaryotic ubiquitin-like protein family. As to quaternary structure, strongly interacts with the proteasome-associated ATPase ARC through a hydrophobic interface; the interacting region of Pup lies in its C-terminal half. There is one Pup binding site per ARC hexamer ring. Post-translationally, is modified by deamidation of its C-terminal glutamine to glutamate by the deamidase Dop, a prerequisite to the subsequent pupylation process.

Its pathway is protein degradation; proteasomal Pup-dependent pathway. Functionally, protein modifier that is covalently attached to lysine residues of substrate proteins, thereby targeting them for proteasomal degradation. The tagging system is termed pupylation. This chain is Prokaryotic ubiquitin-like protein Pup, found in Mycobacterium tuberculosis (strain ATCC 25177 / H37Ra).